Here is a 388-residue protein sequence, read N- to C-terminus: Glucose-1-phosphate adenylyltransferase (388 aa).

Residues tyrosine 100, glycine 165, 180–181, and serine 191 contribute to the alpha-D-glucose 1-phosphate site; that span reads EK.

It belongs to the bacterial/plant glucose-1-phosphate adenylyltransferase family. As to quaternary structure, homotetramer.

The catalysed reaction is alpha-D-glucose 1-phosphate + ATP + H(+) = ADP-alpha-D-glucose + diphosphate. It functions in the pathway glycan biosynthesis; glycogen biosynthesis. Functionally, involved in the biosynthesis of ADP-glucose, a building block required for the elongation reactions to produce glycogen. Catalyzes the reaction between ATP and alpha-D-glucose 1-phosphate (G1P) to produce pyrophosphate and ADP-Glc. The chain is Glucose-1-phosphate adenylyltransferase from Clostridium perfringens (strain SM101 / Type A).